Reading from the N-terminus, the 216-residue chain is MGGFLVLNSSNNVVRTVPSKKRKHPEYKSKIRELISGIRSDNLREAVRLPQGVDINEWFAMNTVDFFNQISLLYATLEEFCTQTTCPVMNAGRYEYRWADGTTITKPKTVSAPKYVEYLIDWVETEIDNEAIFPKNPGEPFPPNFEDFVKRILRKLFRVYAHIYYSHFHEIVALNEQAHLNTCFKHFLLFVSEFQLVDKEKEMAPIKSLVETMLDQ.

Cys-81, Cys-86, His-162, and His-167 together coordinate Zn(2+).

Belongs to the MOB1/phocein family.

It localises to the nucleus. The chain is MOB kinase activator-like 2A from Arabidopsis thaliana (Mouse-ear cress).